The primary structure comprises 48 residues: Sperm protamine P1 (48 aa).

This sequence belongs to the protamine P1 family. As to quaternary structure, cross-linked by interchain disulfide bonds around the DNA-helix. Testis.

It localises to the nucleus. It is found in the chromosome. In terms of biological role, protamines substitute for histones in the chromatin of sperm during the haploid phase of spermatogenesis. They compact sperm DNA into a highly condensed, stable and inactive complex. The protein is Sperm protamine P1 (PRM1) of Cavia porcellus (Guinea pig).